Reading from the N-terminus, the 775-residue chain is Serine/threonine-protein kinase ppk6 (775 aa).

Residues Ser132 and Ser134 each carry the phosphoserine modification. Residues 503–758 (YTTIKELGIG…IEETLQHHWF (256 aa)) enclose the Protein kinase domain. ATP contacts are provided by residues 509–517 (LGIGAYGQV) and Lys533. Asp636 acts as the Proton acceptor in catalysis.

Belongs to the protein kinase superfamily. Ser/Thr protein kinase family.

The protein resides in the cytoplasm. Its subcellular location is the nucleus. It catalyses the reaction L-seryl-[protein] + ATP = O-phospho-L-seryl-[protein] + ADP + H(+). The catalysed reaction is L-threonyl-[protein] + ATP = O-phospho-L-threonyl-[protein] + ADP + H(+). The sequence is that of Serine/threonine-protein kinase ppk6 (ppk6) from Schizosaccharomyces pombe (strain 972 / ATCC 24843) (Fission yeast).